A 582-amino-acid polypeptide reads, in one-letter code: Formate--tetrahydrofolate ligase (582 aa).

Position 65-72 (65-72 (TPLGEGKT)) interacts with ATP.

Belongs to the formate--tetrahydrofolate ligase family.

The catalysed reaction is (6S)-5,6,7,8-tetrahydrofolate + formate + ATP = (6R)-10-formyltetrahydrofolate + ADP + phosphate. It participates in one-carbon metabolism; tetrahydrofolate interconversion. The sequence is that of Formate--tetrahydrofolate ligase from Vibrio vulnificus (strain CMCP6).